Consider the following 386-residue polypeptide: uncharacterized protein (386 aa).

The next 12 helical transmembrane spans lie at 8–28 (VFVIWITTFTTMLGVGFIAPI), 43–63 (IGLIFGSFALARTVAQIPVGV), 79–99 (FFYGVSTLMYNFVSTVLGFLI), 102–122 (IFTGIFSAFVTPVAGSYIAAI), 134–154 (IFNSAITLGFGIGPFIGGILA), 156–176 (MYGIKMPFYFCGFLGILAAII), 216–236 (FIINVSNVMINAGIYAYLALY), 241–261 (NITISQVGFMIALTNILMALL), 272–292 (LGNIMIIIGIFIISFGMYLLS), 297–317 (FLTILASLTIIAVGSSISSTA), 342–362 (INIGMFIGAVSFGFLADILGI), and 365–385 (MYKFSAIFSIVVGIISYLRIE).

It belongs to the major facilitator superfamily.

The protein resides in the cell membrane. This is an uncharacterized protein from Methanocaldococcus jannaschii (strain ATCC 43067 / DSM 2661 / JAL-1 / JCM 10045 / NBRC 100440) (Methanococcus jannaschii).